The sequence spans 391 residues: Squalene synthase 8 (391 aa).

It belongs to the phytoene/squalene synthase family. The cofactor is Mg(2+). Requires Mn(2+) as cofactor.

It localises to the endoplasmic reticulum. The enzyme catalyses 2 (2E,6E)-farnesyl diphosphate + NADH + H(+) = squalene + 2 diphosphate + NAD(+). It carries out the reaction 2 (2E,6E)-farnesyl diphosphate + NADPH + H(+) = squalene + 2 diphosphate + NADP(+). The protein operates within terpene metabolism; lanosterol biosynthesis; lanosterol from farnesyl diphosphate: step 1/3. Functionally, component of the triterpene saponins (e.g. ginsenosides or panaxosides) and phytosterols biosynthetic pathways. Catalyzes the biosynthesis of squalene. This Panax ginseng (Korean ginseng) protein is Squalene synthase 8.